A 24-amino-acid polypeptide reads, in one-letter code: Humanin-like 3 (24 aa).

The protein belongs to the humanin family. Highly expressed in testis. Also expressed in kidney, heart, skeletal muscles and brain.

Its subcellular location is the secreted. The protein localises to the cytoplasm. In terms of biological role, plays a role as a neuroprotective and antiapoptotic factor. The protein is Humanin-like 3 of Homo sapiens (Human).